Reading from the N-terminus, the 445-residue chain is Chromosome partition protein MukF (445 aa).

The tract at residues 213-241 (LSETSNTLKELQDTLQAAGDELQTQILDI) is leucine-zipper.

It belongs to the MukF family. Interacts, and probably forms a ternary complex, with MukE and MukB via its C-terminal region. The complex formation is stimulated by calcium or magnesium. It is required for an interaction between MukE and MukB.

It is found in the cytoplasm. It localises to the nucleoid. Functionally, involved in chromosome condensation, segregation and cell cycle progression. May participate in facilitating chromosome segregation by condensation DNA from both sides of a centrally located replisome during cell division. Not required for mini-F plasmid partitioning. Probably acts via its interaction with MukB and MukE. Overexpression results in anucleate cells. It has a calcium binding activity. The polypeptide is Chromosome partition protein MukF (Vibrio vulnificus (strain CMCP6)).